The chain runs to 281 residues: Octanoyl-[GcvH]:protein N-octanoyltransferase (281 aa).

The BPL/LPL catalytic domain maps to 44–250 (GESAATMRSW…TLQQFAPKLT (207 aa)). The Acyl-thioester intermediate role is filled by Cys-149.

Belongs to the octanoyltransferase LipL family.

It carries out the reaction N(6)-octanoyl-L-lysyl-[glycine-cleavage complex H protein] + L-lysyl-[lipoyl-carrier protein] = N(6)-octanoyl-L-lysyl-[lipoyl-carrier protein] + L-lysyl-[glycine-cleavage complex H protein]. Its pathway is protein modification; protein lipoylation via endogenous pathway; protein N(6)-(lipoyl)lysine from octanoyl-[acyl-carrier-protein]. In terms of biological role, catalyzes the amidotransfer (transamidation) of the octanoyl moiety from octanoyl-GcvH to the lipoyl domain of the E2 subunit of lipoate-dependent enzymes. The sequence is that of Octanoyl-[GcvH]:protein N-octanoyltransferase from Bacillus anthracis.